The following is a 404-amino-acid chain: Cysteine--tRNA ligase (404 aa).

Cys14 lines the Zn(2+) pocket. Residues 16-26 (PTVYSDVHIGN) carry the 'HIGH' region motif. Residues Cys190, His216, and Glu220 each coordinate Zn(2+). The 'KMSKS' region signature appears at 248–252 (KMAKS). Lys251 contacts ATP.

This sequence belongs to the class-I aminoacyl-tRNA synthetase family. Monomer. Requires Zn(2+) as cofactor.

Its subcellular location is the cytoplasm. It catalyses the reaction tRNA(Cys) + L-cysteine + ATP = L-cysteinyl-tRNA(Cys) + AMP + diphosphate. This is Cysteine--tRNA ligase from Mesomycoplasma hyopneumoniae (strain 232) (Mycoplasma hyopneumoniae).